Reading from the N-terminus, the 334-residue chain is BTB and MATH domain-containing protein 39 (334 aa).

In terms of domain architecture, MATH spans 14–141; it reads IVTLVFNIYN…EGRFQIEFDL (128 aa). Residues 164-229 form the BTB domain; it reads ADGELITDGK…LQLDSFEVSV (66 aa).

In Caenorhabditis elegans, this protein is BTB and MATH domain-containing protein 39 (bath-39).